A 379-amino-acid chain; its full sequence is Cytochrome-c peroxidase IdrP1 (379 aa).

A signal peptide spans 1-24 (MNNRKPLQLSLLVASLAVAFTASA). Cytochrome c domains are found at residues 50-158 (EKIA…DAFK) and 204-355 (TSQK…EALS). Heme c is bound by residues cysteine 72, cysteine 75, histidine 76, cysteine 219, cysteine 222, and histidine 223.

The iodate reductase (Idr) complex is composed of a molybdopterin-dependent iodate reductase (IdrA and IdrB subunits) and two associated peroxidases (IdrP1 and IdrP2). Heme c is required as a cofactor.

Its subcellular location is the periplasm. The catalysed reaction is 2 Fe(II)-[cytochrome c] + H2O2 + 2 H(+) = 2 Fe(III)-[cytochrome c] + 2 H2O. Involved in iodate respiration. Probably reduces the H(2)O(2) produced by IdrA/IdrB to H(2)O, using a reduced cytochrome c as the electron donor. This chain is Cytochrome-c peroxidase IdrP1, found in Pseudomonas sp. (strain SCT).